Here is a 568-residue protein sequence, read N- to C-terminus: Urease subunit alpha (568 aa).

The Urease domain occupies 131–568; it reads GGMDAHIHFI…LPLAQRYFLY (438 aa). The Ni(2+) site is built by His136, His138, and Lys219. Position 219 is an N6-carboxylysine (Lys219). His221 provides a ligand contact to substrate. The Ni(2+) site is built by His248 and His274. His322 functions as the Proton donor in the catalytic mechanism. Asp362 contacts Ni(2+).

The protein belongs to the metallo-dependent hydrolases superfamily. Urease alpha subunit family. As to quaternary structure, heterotrimer of UreA (gamma), UreB (beta) and UreC (alpha) subunits. Three heterotrimers associate to form the active enzyme. It depends on Ni cation as a cofactor. In terms of processing, carboxylation allows a single lysine to coordinate two nickel ions.

The protein resides in the cytoplasm. The enzyme catalyses urea + 2 H2O + H(+) = hydrogencarbonate + 2 NH4(+). The protein operates within nitrogen metabolism; urea degradation; CO(2) and NH(3) from urea (urease route): step 1/1. The polypeptide is Urease subunit alpha (Cereibacter sphaeroides (strain ATCC 17023 / DSM 158 / JCM 6121 / CCUG 31486 / LMG 2827 / NBRC 12203 / NCIMB 8253 / ATH 2.4.1.) (Rhodobacter sphaeroides)).